The primary structure comprises 544 residues: Major royal jelly protein 3 (544 aa).

The N-terminal stretch at 1–20 (MTKWLLLVVCLGIACQDVTS) is a signal peptide. A glycan (N-linked (GlcNAc...) asparagine) is linked at Asn183. The disordered stretch occupies residues 421-544 (RYHNQNAGNQ…NQVHHSSKLH (124 aa)). 20 repeat units span residues 424-428 (NQNAG), 429-433 (NQNAD), 434-438 (NQNAD), 439-443 (NQNAN), 444-448 (NQNAD), 449-453 (NQNAN), 454-458 (KQNGN), 459-463 (RQNDN), 464-468 (RQNDN), 469-473 (KQNGN), 474-478 (RQNDN), 479-483 (KQNGN), 484-488 (RQNDN), 489-493 (KQNGN), 494-498 (RQNGN), 499-503 (KQNDN), 504-508 (KQNGN), 509-513 (RQNDN), 514-518 (KRNGN), and 519-523 (RQNDN). Composition is skewed to low complexity over residues 424 to 460 (NQNA…GNRQ), 468 to 510 (NKQN…GNRQ), and 518 to 530 (NRQN…QNDN). Residues 424–523 (NQNAGNQNAD…KRNGNRQNDN (100 aa)) are 23 X 5 AA tandem repeats of [NKR]-[RQ]-N-[AGD]-[DNG]. A 21; half-length repeat occupies 524–525 (QN). Repeat copies occupy residues 526 to 530 (NQNDN) and 531 to 535 (NRNDN).

It belongs to the major royal jelly protein family. As to quaternary structure, homoligomer; in the absence of RNA, assembles into a higher-order oligomeric form, composed of around 20 monomer units. In terms of tissue distribution, found in and secreted from the hypopharyngeal glands of the worker honey bee (at protein level); expression peaks at 12 days post eclosion. Expressed in the brains of worker bees. Expressed in the brains of adult worker bees peaking at 12 days post eclosion (at protein level). Expressed in the spermatheca of adult queen bees (at protein level); Expression levels are higher in mated queens than in virgin queens. Expressed in queen bee ovaries and male drone testes. Expression in the head of forager worker bees is lower than in the heads of nurse worker bees.

It is found in the secreted. In terms of biological role, abundant protein component of royal jelly, a substance produced in the hypopharyngeal gland containing proteins, free amino acids, fatty acids, sugars and other nutrients, which is fed to developing larvae by worker nurse bees. Major royal jelly proteins (MRJPs) are high in essential amino acids and probably have a nutritional function in larval food. All larvae are fed some royal jelly (also known as worker jelly) early in their development but it forms the principal source of nutrition for larvae destined to become queen bees. Secreted RNA-binding protein required to concentrate, stabilize and enhance environmental RNA bioavailability in the honey bee royal jelly. Acts as a RNA-aggregating protein: binds 18 nucleotides and longer single- and double-stranded RNA (ssRNA and dsRNA, respectively) in a non-specific manner. RNA-binding drives super-order assembly of oligomers into extracellular ribonucleoprotein granules that concentrate, protect and enhance RNA uptake granules, facilitating RNA transfer among bees. Produced in the spermatheca of adult queen bees, along with other major royal jelly proteins, where it may act as a nutrient supply for sperm stored by mated queens, or be involved in energy metabolism. The polypeptide is Major royal jelly protein 3 (Apis mellifera (Honeybee)).